The primary structure comprises 129 residues: MPRLLGVEIPAKKKVAYSLRYINGIGPTRADLLVKEAGLSPDMRAQDLTEEQLNKILHLITEHKWVLEGDLRREIAGNLKRLQAINCYRGVRHRRGLPVRGQRTSTNARTRKGPRKTVGVSKAAAAAKA.

Residues 96 to 129 (GLPVRGQRTSTNARTRKGPRKTVGVSKAAAAAKA) are disordered.

It belongs to the universal ribosomal protein uS13 family. In terms of assembly, part of the 30S ribosomal subunit. Forms a loose heterodimer with protein S19. Forms two bridges to the 50S subunit in the 70S ribosome.

In terms of biological role, located at the top of the head of the 30S subunit, it contacts several helices of the 16S rRNA. In the 70S ribosome it contacts the 23S rRNA (bridge B1a) and protein L5 of the 50S subunit (bridge B1b), connecting the 2 subunits; these bridges are implicated in subunit movement. Contacts the tRNAs in the A and P-sites. In Opitutus terrae (strain DSM 11246 / JCM 15787 / PB90-1), this protein is Small ribosomal subunit protein uS13.